Reading from the N-terminus, the 1309-residue chain is Lysine-specific demethylase 2B (1309 aa).

A Phosphoserine modification is found at S26. The 169-residue stretch at 147–315 (FSHTKLEHLV…MQLRIYEIED (169 aa)) folds into the JmjC domain. T208 contacts substrate. Residues H211 and D213 each coordinate Fe cation. K228 contributes to the substrate binding site. H283 is a Fe cation binding site. Acidic residues predominate over residues 378 to 403 (DMEEESCEQQPQEEEEEEEDKEEEGD). Positions 378–476 (DMEEESCEQQ…PTGSPATEVS (99 aa)) are disordered. The segment covering 404–413 (GADKTPKPPT) has biased composition (basic and acidic residues). The span at 415–424 (DPTSPTSTPP) shows a compositional bias: low complexity. Residues S447 and S450 each carry the phosphoserine modification. Phosphothreonine is present on T466. Positions 467 to 476 (PTGSPATEVS) are enriched in polar residues. S470 carries the post-translational modification Phosphoserine. Residues 579-625 (ARRRRTRCRKCEACLRTECGECHFCKDMKKFGGPGRMKQSCIMRQCI) form a CXXC-type zinc finger. The Zn(2+) site is built by C586, C589, C592, C597, C600, C603, C619, C624, C635, C638, C661, C664, H669, C672, C692, and C695. A PHD-type zinc finger spans residues 632-698 (TAVCLVCGEA…CWECPKCNHA (67 aa)). Disordered regions lie at residues 700–816 (KTGK…SLSP) and 828–1005 (QLKP…SASP). The span at 722-772 (KEQKMNRDNKEGQEPAKRRSECEEAPRRRSDEHPKKVPADGILRRKSDDVH) shows a compositional bias: basic and acidic residues. A compositionally biased stretch (low complexity) spans 792-816 (SSLQTSPGSSSHLSPRPPLGSSLSP). Residues K830 and K863 each participate in a glycyl lysine isopeptide (Lys-Gly) (interchain with G-Cter in SUMO2) cross-link. Positions 883-892 (SRSSSPTAGP) are enriched in polar residues. Residues 905–914 (KVKMRRKRRL) show a composition bias toward basic residues. The span at 915 to 933 (VNKELSKELSKELNHEIQK) shows a compositional bias: basic and acidic residues. Residues 916-944 (NKELSKELSKELNHEIQKTESTLAHESQQ) are a coiled coil. Position 924 is a phosphoserine (S924). Positions 934–946 (TESTLAHESQQPI) are enriched in polar residues. Residues S948 and S952 each carry the phosphoserine modification. The span at 955 to 968 (DEPKRPLSHCERPH) shows a compositional bias: basic and acidic residues. S991 and S1004 each carry phosphoserine. One can recognise an F-box domain in the interval 1032 to 1078 (DGAAHVMHREVWMAVFSYLSHRDLCVCMRVCRTWNRWCCDKRLWTRI). LRR repeat units follow at residues 1106–1127 (WTNI…LRDL), 1129–1155 (LSGC…DVQW), 1195–1220 (GLDI…QLSY), 1221–1250 (CNHI…NLSD), 1251–1275 (CNKV…DLRY), and 1276–1309 (CKQV…QKLS).

The protein belongs to the JHDM1 histone demethylase family. In terms of assembly, interacts with SKP1, forming heterodimers. The KDM2B-SKP1 heterodimeric complex interacts with the PCGF1-BCORL heterodimeric complex to form a homotetrameric polycomb repression complex 1 (PRC1.1). Directly interacts with CUL1. The SKP1-KDM2B interacts with UBB. Requires Fe(2+) as cofactor.

Its subcellular location is the nucleus. The protein localises to the nucleolus. The protein resides in the chromosome. The catalysed reaction is N(6),N(6)-dimethyl-L-lysyl(36)-[histone H3] + 2 2-oxoglutarate + 2 O2 = L-lysyl(36)-[histone H3] + 2 formaldehyde + 2 succinate + 2 CO2. Histone demethylase activity is inhibited by fumarate. In terms of biological role, histone demethylase that demethylates 'Lys-4' and 'Lys-36' of histone H3, thereby playing a central role in histone code. Preferentially demethylates trimethylated H3 'Lys-4' and dimethylated H3 'Lys-36' residue while it has weak or no activity for mono- and tri-methylated H3 'Lys-36'. Preferentially binds the transcribed region of ribosomal RNA and represses the transcription of ribosomal RNA genes which inhibits cell growth and proliferation. May also serve as a substrate-recognition component of the SCF (SKP1-CUL1-F-box protein)-type E3 ubiquitin ligase complex. The sequence is that of Lysine-specific demethylase 2B (Kdm2b) from Mus musculus (Mouse).